Here is an 806-residue protein sequence, read N- to C-terminus: MSNKTLPYCCEHGLKDEVIALLAKGEDVNQKDGSNRYPLHYAAIGGYIEIVAMLLERGALVNCSTPRGATPLHYASRGGRIECIQLLIDNKADVNCRDGAGSTPLHTALQCNETKCAIALIETFGADVNLKTAEGSTALHLASARGLVPVIVALLENGARADVRDSKENSPFQSLPINLTENEKKEKIENSISQDISKLFNINKNREFSGVGKKEDDDNNMKIDKQESEQQSTSDKLYSDITFLIENQKVYAHKCILQARCPNFMSSINNKIEQQQSQKPIEIKDYSFKLFLSFIEWIYTGSIEKFESTSKSIDLSFQFSILLMGEKFDCKGLVSYCREFIKESIGDSNVGSIWSIIKKLPTSTRSNLGNLVRDCLITMVRSWNIFTMTKTFSTDINKSDIIEIIKSLAPFITETPISEIKQTRTANANASNSNQSKTPAKRTSTTNTNNNIPQQNITSSNNTPQQNTSSSSSSSTTSSTPSKSSSSTPSKSTSTSSSSSSSSSSSSSSSSNYSDSMNEKNLTFCKGLINGMFKKKTSLAFQRPVDPLAEGIPDYFDVIKHPMDLGTIKGKLDNNGYSTIKDFAADVRLMFENALTYNADSSPVWKHAKTLLNAFDQKFLQNFPNEKPPTYKPPPPTPTPIPTQQQQQQSTSSTSTPTSEKKRKHDEHVKVKEDTNSAQPTSSSSNHTNGENASSSSSSSSSKQSNNNNNNNNNNNSNSTTNSSSSSSSTTTTQKKYSDEERRSLMERINELAPDDVQEVLNIIDPNAIKQADESLEIDMYQIDDKNLSQVESFINECFKKQKQDE.

ANK repeat units follow at residues 1 to 30, 34 to 63, 67 to 96, 100 to 130, and 134 to 163; these read MSNK…DVNQ, SNRY…LVNC, RGAT…DVNC, AGST…DVNL, and EGST…RADV. Over residues 210 to 228 the composition is skewed to basic and acidic residues; the sequence is GVGKKEDDDNNMKIDKQES. The interval 210-231 is disordered; that stretch reads GVGKKEDDDNNMKIDKQESEQQ. In terms of domain architecture, BTB spans 239–307; it reads SDITFLIENQ…IYTGSIEKFE (69 aa). Disordered stretches follow at residues 423–517 and 621–743; these read TRTA…SDSM and QNFP…EERR. 2 stretches are compositionally biased toward low complexity: residues 426-436 and 443-511; these read ANANASNSNQS and TSTT…SSSS. A Bromo domain is found at 516–622; the sequence is SMNEKNLTFC…NAFDQKFLQN (107 aa). The span at 626-641 shows a compositional bias: pro residues; that stretch reads EKPPTYKPPPPTPTPI. The segment covering 642 to 658 has biased composition (low complexity); sequence PTQQQQQQSTSSTSTPT. Over residues 666 to 675 the composition is skewed to basic and acidic residues; the sequence is DEHVKVKEDT. Over residues 676-693 the composition is skewed to polar residues; sequence NSAQPTSSSSNHTNGENA. Residues 694-733 show a composition bias toward low complexity; it reads SSSSSSSSSKQSNNNNNNNNNNNSNSTTNSSSSSSSTTTT. The 80-residue stretch at 727–806 folds into the NET domain; the sequence is SSSTTTTQKK…ECFKKQKQDE (80 aa).

The chain is Ankyrin repeat, bromo and BTB domain-containing protein DDB_G0293800 from Dictyostelium discoideum (Social amoeba).